A 502-amino-acid polypeptide reads, in one-letter code: ATP synthase subunit alpha (502 aa).

169-176 (GDRQTGKT) is an ATP binding site.

The protein belongs to the ATPase alpha/beta chains family. F-type ATPases have 2 components, CF(1) - the catalytic core - and CF(0) - the membrane proton channel. CF(1) has five subunits: alpha(3), beta(3), gamma(1), delta(1), epsilon(1). CF(0) has three main subunits: a(1), b(2) and c(9-12). The alpha and beta chains form an alternating ring which encloses part of the gamma chain. CF(1) is attached to CF(0) by a central stalk formed by the gamma and epsilon chains, while a peripheral stalk is formed by the delta and b chains.

The protein resides in the cell inner membrane. It catalyses the reaction ATP + H2O + 4 H(+)(in) = ADP + phosphate + 5 H(+)(out). Its function is as follows. Produces ATP from ADP in the presence of a proton gradient across the membrane. The alpha chain is a regulatory subunit. The chain is ATP synthase subunit alpha from Thermodesulfovibrio yellowstonii (strain ATCC 51303 / DSM 11347 / YP87).